We begin with the raw amino-acid sequence, 507 residues long: tRNA-2-methylthio-N(6)-dimethylallyladenosine synthase (507 aa).

Positions 13 to 129 constitute an MTTase N-terminal domain; that stretch reads RTYQVRTYGC…LPALLERARH (117 aa). Residues cysteine 22, cysteine 58, cysteine 92, cysteine 166, cysteine 170, and cysteine 173 each coordinate [4Fe-4S] cluster. The region spanning 152-388 is the Radical SAM core domain; the sequence is RESAYAAWVS…IALQESVTLE (237 aa). The TRAM domain maps to 391–462; it reads QKQIGRMIEV…PHHLIADDGV (72 aa). Residues 459–478 show a composition bias toward basic and acidic residues; it reads DDGVRSHRRTRAGDAHEAGK. Positions 459–492 are disordered; the sequence is DDGVRSHRRTRAGDAHEAGKKPSTPGIGLGMPAI.

This sequence belongs to the methylthiotransferase family. MiaB subfamily. As to quaternary structure, monomer. It depends on [4Fe-4S] cluster as a cofactor.

It is found in the cytoplasm. The catalysed reaction is N(6)-dimethylallyladenosine(37) in tRNA + (sulfur carrier)-SH + AH2 + 2 S-adenosyl-L-methionine = 2-methylsulfanyl-N(6)-dimethylallyladenosine(37) in tRNA + (sulfur carrier)-H + 5'-deoxyadenosine + L-methionine + A + S-adenosyl-L-homocysteine + 2 H(+). In terms of biological role, catalyzes the methylthiolation of N6-(dimethylallyl)adenosine (i(6)A), leading to the formation of 2-methylthio-N6-(dimethylallyl)adenosine (ms(2)i(6)A) at position 37 in tRNAs that read codons beginning with uridine. The polypeptide is tRNA-2-methylthio-N(6)-dimethylallyladenosine synthase (Mycobacteroides abscessus (strain ATCC 19977 / DSM 44196 / CCUG 20993 / CIP 104536 / JCM 13569 / NCTC 13031 / TMC 1543 / L948) (Mycobacterium abscessus)).